We begin with the raw amino-acid sequence, 219 residues long: Transmembrane emp24 domain-containing protein 10 (219 aa).

The signal sequence occupies residues 1–31 (MSGLSGPLSWPGPLLSALLFLFLLGPSSVLG). The tract at residues 1 to 142 (MSGLSGPLSW…KNYEEIAKVE (142 aa)) is required for interaction with STX17. Over 32–185 (ISFHLPVNSR…RDTNESTNTR (154 aa)) the chain is Lumenal. Positions 41-193 (RKCLREEIHK…TRVLYFSIFS (153 aa)) constitute a GOLD domain. The interval 147–178 (LEVELRRLEDLSESIVNDFAYMKKREEEMRDT) is required for TMED10 and TMED2 cis-Golgi network localization. Residues R171 and R176 each carry the dimethylated arginine modification. N-linked (GlcNAc...) asparagine glycosylation is present at N179. Residues 186-206 (VLYFSIFSMFCLIGLATWQVF) traverse the membrane as a helical segment. The interval 204 to 219 (QVFYLRRFFKAKKLIE) is interaction with COPG1. Topologically, residues 207–219 (YLRRFFKAKKLIE) are cytoplasmic. The interaction with ARF1 and IL1B stretch occupies residues 207–219 (YLRRFFKAKKLIE). The short motif at 211-212 (FF) is the COPII vesicle coat-binding element. The short motif at 211 to 219 (FFKAKKLIE) is the COPI vesicle coat-binding element.

The protein belongs to the EMP24/GP25L family. Predominantly dimeric and to a lesser extent monomeric in the ER. Monomer and dimer in ERGIC and cis-Golgi network. Forms homooligomer (via GOLD domain); the assembly is promoted by direct binding with leaderless cargos and may form a protein channel that facilitates cargo entry into the ERGIC. Forms heterooligomeric complexes with other members of the p24 family such as TMED2, TMED7 and TMED9. Interacts (via GOLD domain) with TMED2 (via GOLD domain); the complex is required for export of TMED10 from the ER to the cis-Golgi network; the complex is proposed to be involved in cis-Golgi network dynamics and / or biogenesis. Associates with the COPI vesicle coat subunits (coatomer). Tetramerization of the cytoplasmic domain at the Golgi membrane in vitro; the complex is proposed to interact with COPI coatomer and induce budding of the vesicles. Interacts with COPG1; the interaction involves TMED10 homodimer. Interacts with ARF1 (GDP-bound); the interaction probably involves a TMED10 oligomer. Interacts with SEC23A, SEC24B, SEC24C and SEC24D components of the coat protein complex II/COPII, indicative of an association of TMED10 with the COPII vesicle coat. Interacts with CD59. Interacts with MPPE1/PGAP5; the complex might recruit and sort GPI-anchored proteins to the ER-exit site, or the interaction might lead to recycling of PGAP5 between the ER and the Golgi. Interacts with F2LR1/PAR2. Interacts with KDELR2/ERD2; the interaction is disrupted by KDELR2 ligand. Found in a complex composed at least of SURF4, TMED2 and TMED10. Associates with the presenilin-dependent gamma-secretase complex. Interacts with STX17; the interaction is direct. Interacts with IL-1; the interaction is direct. Interacts with RAB21 (active GTP-bound form); the interaction is indirect and regulates TMED10 abundance and localization at the Golgi. Ubiquitous.

Its subcellular location is the endoplasmic reticulum membrane. The protein resides in the endoplasmic reticulum-Golgi intermediate compartment membrane. The protein localises to the golgi apparatus membrane. It is found in the golgi apparatus. It localises to the cis-Golgi network membrane. Its subcellular location is the trans-Golgi network membrane. The protein resides in the cytoplasmic vesicle. The protein localises to the secretory vesicle membrane. It is found in the cell membrane. It localises to the melanosome. In terms of biological role, cargo receptor involved in protein vesicular trafficking and quality control in the endoplasmic reticulum (ER) and Golgi. The p24 protein family is a group of transmembrane proteins that bind coat protein complex I/COPI and coat protein complex II/COPII involved in vesicular trafficking between the membranes. Acts at the lumenal side for incorporation of secretory cargo molecules into transport vesicles and involved in vesicle coat formation at the cytoplasmic side. Mainly functions in the early secretory pathway and cycles between the ER, ER-Golgi intermediate compartment (ERGIC) and Golgi, mediating cargo transport through COPI and COPII-coated vesicles. In COPII vesicle-mediated anterograde transport, involved in the transport of GPI-anchored proteins by acting together with TMED2 as their cargo receptor; the function specifically implies SEC24C and SEC24D of the COPII vesicle coat and lipid raft-like microdomains of the ER. Recognizes GPI anchors structural remodeled in the ER by the GPI inositol-deacylase/PGAP1 and the metallophosphoesterase MPPE1/PGAP5. In COPI vesicle-mediated retrograde transport, involved in the biogenesis of COPI vesicles and vesicle coat recruitment. Involved in trafficking of amyloid beta A4 protein and soluble APP-beta release (independent from the modulation of gamma-secretase activity). Involved in the KDELR2-mediated retrograde transport of the toxin A subunit (CTX-A-K63)together with COPI and the COOH terminus of KDELR2. On Golgi membranes, acts as a primary receptor for ARF1-GDP, a GTP-binding protein involved in COPI-vesicle formation. Increases coatomer-dependent GTPase-activating activity of ARFGAP2 which mediates the hydrolysis of ARF1-bound GTP and therefore modulates protein trafficking from the Golgi apparatus. Involved in the exocytic trafficking of G protein-coupled receptors F2LR1/PAR2 (trypsin and tryspin-like enzyme receptor), OPRM1 (opioid receptor) and P2RY4 (UTD and UDP receptor) from the Golgi to the plasma membrane, thus contributing to receptor resensitization. In addition to its cargo receptor activity, may also act as a protein channel after oligomerization, facilitating the post-translational entry of leaderless cytoplasmic cargo into the ERGIC. Involved in the translocation into ERGIC, the vesicle entry and the secretion of leaderless cargos (lacking the secretion signal sequence), including the mature form of interleukin 1/IL-1 family members, the alpha-crystallin B chain HSPB5, the carbohydrate-binding proteins galectin-1/LGALS1 and galectin-3/LGALS3, the microtubule-associated protein Tau/MAPT, and the annexin A1/ANXA1; the translocation process is dependent on cargo protein unfolding and enhanced by chaperones HSP90AB1 and HSP90B1/GRP9. Could also associates with the presenilin-dependent gamma-secretase complex in order to regulate gamma-cleavages of the amyloid beta A4 protein to yield amyloid-beta 40/Abeta40. The protein is Transmembrane emp24 domain-containing protein 10 of Rattus norvegicus (Rat).